The following is a 1483-amino-acid chain: Protein ORF C (1483 aa).

Disordered regions lie at residues 135–268 (LNDR…GRPP), 306–334 (VPYQ…LRPV), 383–506 (RRRA…FKRH), 518–653 (SIDD…DRNR), 680–911 (RQRR…TSVS), 949–976 (SSDD…RGGS), 1013–1061 (ALQQ…TDLI), and 1089–1299 (FSVA…QPSD). Positions 141 to 153 (AAGSAQRGSAGSR) are enriched in low complexity. Polar residues predominate over residues 157-170 (DNLTPTAADTTGAQ). Composition is skewed to low complexity over residues 190 to 206 (ASNV…RRQQ) and 220 to 251 (ARQQ…TTAT). Positions 252–264 (RQVFEQQGPSTIQ) are enriched in polar residues. Low complexity-rich tracts occupy residues 424-449 (SGQS…TTGT), 474-483 (SNEPSRQSQS), and 529-541 (TMTQ…STTR). A compositionally biased stretch (polar residues) spans 596 to 607 (GSVTTTQPSGQL). Basic and acidic residues predominate over residues 609-621 (SDDRGRPAPERRQ). A compositionally biased stretch (polar residues) spans 622-640 (QPTSRQTVAQTNIIPNTSG). Positions 680 to 689 (RQRRETEAEH) are enriched in basic and acidic residues. The segment covering 699-710 (TGVTPQRSNNPF) has biased composition (polar residues). The segment covering 740-749 (SLREYRRRDP) has biased composition (basic and acidic residues). Residues 754 to 774 (GRSYTDGSTTSDGDSSDNSWS) are compositionally biased toward low complexity. Polar residues predominate over residues 841-876 (NLKSPSPRTKLTRSSSLKSPGTTTRDTQQTSHPLTR). Low complexity predominate over residues 894-909 (DSGGSSDGNTGSSQTS). 2 stretches are compositionally biased toward polar residues: residues 1096-1109 (GSTS…SSIP) and 1116-1125 (GPSTMTSQSV). Over residues 1148-1158 (SQSQPSSEQPA) the composition is skewed to low complexity. A compositionally biased stretch (polar residues) spans 1188–1202 (QPQSTVTNTQTQDVL). 2 stretches are compositionally biased toward low complexity: residues 1204-1226 (SQGS…KTGS) and 1233-1251 (KSAL…SGKS). Polar residues predominate over residues 1258-1276 (AASSTDPTTKPTRKVSINA). Low complexity predominate over residues 1284–1299 (KSSTKQSTKTSTQPSD). A coiled-coil region spans residues 1408 to 1438 (AEQIRNLEVDELKILRQQVRERIANERQQQD). The interval 1454-1483 (DMLVSEESAAPTPLPMDTGRFTPKSDVDMS) is disordered.

The sequence is that of Protein ORF C from Elephantid herpesvirus 1 (isolate Asian elephant/Berlin/Kiba/1998) (EIHV-1).